Here is a 318-residue protein sequence, read N- to C-terminus: Lipid A biosynthesis acyltransferase (318 aa).

A helical transmembrane segment spans residues 27–47 (PQYWGIWLGIFFLLLLAFVPF). An HXXXXD motif motif is present at residues 145–150 (HGWAID).

It belongs to the LpxL/LpxM/LpxP family. LpxM subfamily.

It localises to the cell inner membrane. It catalyses the reaction an alpha-Kdo-(2-&gt;4)-alpha-Kdo-(2-&gt;6)-(acyl)-lipid IVA + a fatty acyl-[ACP] = an alpha-Kdo-(2-&gt;4)-alpha-Kdo-(2-&gt;6)-lipid A + holo-[ACP]. The protein operates within glycolipid biosynthesis; KDO(2)-lipid A biosynthesis; KDO(2)-lipid A from CMP-3-deoxy-D-manno-octulosonate and lipid IV(A): step 4/4. It participates in bacterial outer membrane biogenesis; lipopolysaccharide biosynthesis. In terms of biological role, catalyzes the transfer of an acyl chain from an acyl-[acyl-carrier-protein] (ACP) to a Kdo(2)-(acyl)-lipid IV(A) to form a Kdo(2)-lipid A. The sequence is that of Lipid A biosynthesis acyltransferase from Haemophilus influenzae (strain ATCC 51907 / DSM 11121 / KW20 / Rd).